We begin with the raw amino-acid sequence, 196 residues long: UPF0340 protein TTHA0583 (196 aa).

This sequence belongs to the UPF0340 family.

This Thermus thermophilus (strain ATCC 27634 / DSM 579 / HB8) protein is UPF0340 protein TTHA0583.